The sequence spans 480 residues: MFGPFKPAPHIAELPAEKIDSTYKRLRWQVFAGIFFGYAAYYFVRANFDLAQPGLIQAGLYSKAELGVIGSAAGLAYGLSKFVMAGMSDRSNPRVFLPFGLLLSGLCMTLMGLFPWATSGIAIMWVMIFLNGWFQGMGWPPCGRTMVHWWSKSERGTIVSIWNTAHNIGGMVPGAMVLLASAIFFSTHGIEAQAKDVWQQSLYFPGIAAMIFAIPVYFVMRDTPQSCGLPSIEKWRNDYPDDYNEKTYENDLTAKEIFVTYVLKNKLLWYIAIANVFVYLIRYGVLKWSPVYLSEVKHFNIKGTAWAYTIYELAAVPGTLLCGWVSDKVFKGKRGLTGFIFMILTTAAVVAYWMNPATPEAELANYSAWYENPYQLTDFVLMTLIGFLIYGPVMLIGLHALELAPKKAAGTAAGFTGLFGYLGGTVSASAVIGWAAQHYGWDGGFYVMIGGGVLAVLLLLIVMVEEGKHKAKLGDTYGTK.

At 1 to 36 the chain is on the cytoplasmic side; that stretch reads MFGPFKPAPHIAELPAEKIDSTYKRLRWQVFAGIFF. Residues 37 to 57 form a helical membrane-spanning segment; it reads GYAAYYFVRANFDLAQPGLIQ. The Periplasmic segment spans residues 58–64; it reads AGLYSKA. Residues 65 to 85 form a helical membrane-spanning segment; the sequence is ELGVIGSAAGLAYGLSKFVMA. Topologically, residues 86 to 94 are cytoplasmic; sequence GMSDRSNPR. A helical membrane pass occupies residues 95-113; the sequence is VFLPFGLLLSGLCMTLMGL. Residues 114–121 are Periplasmic-facing; the sequence is FPWATSGI. The chain crosses the membrane as a helical span at residues 122 to 142; sequence AIMWVMIFLNGWFQGMGWPPC. Topologically, residues 143-161 are cytoplasmic; that stretch reads GRTMVHWWSKSERGTIVSI. Residues 162 to 181 form a helical membrane-spanning segment; the sequence is WNTAHNIGGMVPGAMVLLAS. Over 182–201 the chain is Periplasmic; that stretch reads AIFFSTHGIEAQAKDVWQQS. The helical transmembrane segment at 202–219 threads the bilayer; that stretch reads LYFPGIAAMIFAIPVYFV. The Cytoplasmic segment spans residues 220 to 274; it reads MRDTPQSCGLPSIEKWRNDYPDDYNEKTYENDLTAKEIFVTYVLKNKLLWYIAIA. The helical transmembrane segment at 275-295 threads the bilayer; that stretch reads NVFVYLIRYGVLKWSPVYLSE. Residues 296 to 300 lie on the Periplasmic side of the membrane; the sequence is VKHFN. Residues 301–321 traverse the membrane as a helical segment; it reads IKGTAWAYTIYELAAVPGTLL. Over 322-334 the chain is Cytoplasmic; the sequence is CGWVSDKVFKGKR. Residues 335–354 form a helical membrane-spanning segment; that stretch reads GLTGFIFMILTTAAVVAYWM. The Periplasmic portion of the chain corresponds to 355-359; the sequence is NPATP. A helical transmembrane segment spans residues 360–396; it reads EAELANYSAWYENPYQLTDFVLMTLIGFLIYGPVMLI. Residues 397–415 lie on the Cytoplasmic side of the membrane; the sequence is GLHALELAPKKAAGTAAGF. The helical transmembrane segment at 416 to 437 threads the bilayer; that stretch reads TGLFGYLGGTVSASAVIGWAAQ. Residues 438 to 442 lie on the Periplasmic side of the membrane; that stretch reads HYGWD. The chain crosses the membrane as a helical span at residues 443–463; that stretch reads GGFYVMIGGGVLAVLLLLIVM. Over 464 to 479 the chain is Cytoplasmic; sequence VEEGKHKAKLGDTYGT.

Belongs to the major facilitator superfamily. Organophosphate:Pi antiporter (OPA) (TC 2.A.1.4) family.

It is found in the cell inner membrane. Its function is as follows. Responsible for glycerol-3-phosphate uptake. In Haemophilus influenzae (strain ATCC 51907 / DSM 11121 / KW20 / Rd), this protein is Glycerol-3-phosphate transporter (glpT).